Consider the following 458-residue polypeptide: Adenylosuccinate synthetase (458 aa).

Residues 17–23 (GDEGKGK) and 45–47 (GHT) contribute to the GTP site. D18 (proton acceptor) is an active-site residue. Mg(2+) contacts are provided by D18 and G45. IMP contacts are provided by residues 18-21 (DEGK), 43-46 (NAGH), T137, R151, Q247, T262, and R330. Catalysis depends on H46, which acts as the Proton donor. Residue 326 to 332 (VTTGRSR) participates in substrate binding. Residues R332, 358-360 (KLD), and 440-442 (STS) contribute to the GTP site.

The protein belongs to the adenylosuccinate synthetase family. As to quaternary structure, homodimer. The cofactor is Mg(2+).

It localises to the cytoplasm. The enzyme catalyses IMP + L-aspartate + GTP = N(6)-(1,2-dicarboxyethyl)-AMP + GDP + phosphate + 2 H(+). It participates in purine metabolism; AMP biosynthesis via de novo pathway; AMP from IMP: step 1/2. In terms of biological role, plays an important role in the de novo pathway of purine nucleotide biosynthesis. Catalyzes the first committed step in the biosynthesis of AMP from IMP. The sequence is that of Adenylosuccinate synthetase from Acidovorax sp. (strain JS42).